A 268-amino-acid polypeptide reads, in one-letter code: tRNA (guanine-N(1)-)-methyltransferase (268 aa).

S-adenosyl-L-methionine-binding positions include Gly-113 and 133–138 (IGDYVL). The interval 238-268 (RCPPDPFAHQGPVYEGDQLERPEGGEQGASR) is disordered.

Belongs to the RNA methyltransferase TrmD family. Homodimer.

The protein localises to the cytoplasm. It carries out the reaction guanosine(37) in tRNA + S-adenosyl-L-methionine = N(1)-methylguanosine(37) in tRNA + S-adenosyl-L-homocysteine + H(+). In terms of biological role, specifically methylates guanosine-37 in various tRNAs. The protein is tRNA (guanine-N(1)-)-methyltransferase of Thermomicrobium roseum (strain ATCC 27502 / DSM 5159 / P-2).